The primary structure comprises 276 residues: NADPH-dependent 7-cyano-7-deazaguanine reductase (276 aa).

83–85 serves as a coordination point for substrate; the sequence is IES. Residue 85 to 86 participates in NADPH binding; the sequence is SK. Cysteine 184 (thioimide intermediate) is an active-site residue. The active-site Proton donor is the aspartate 191. 223-224 serves as a coordination point for substrate; sequence HE. 252 to 253 provides a ligand contact to NADPH; the sequence is RG.

This sequence belongs to the GTP cyclohydrolase I family. QueF type 2 subfamily. Homodimer.

It is found in the cytoplasm. It carries out the reaction 7-aminomethyl-7-carbaguanine + 2 NADP(+) = 7-cyano-7-deazaguanine + 2 NADPH + 3 H(+). The protein operates within tRNA modification; tRNA-queuosine biosynthesis. Functionally, catalyzes the NADPH-dependent reduction of 7-cyano-7-deazaguanine (preQ0) to 7-aminomethyl-7-deazaguanine (preQ1). The sequence is that of NADPH-dependent 7-cyano-7-deazaguanine reductase from Pseudomonas putida (strain W619).